We begin with the raw amino-acid sequence, 885 residues long: Leucine--tRNA ligase (885 aa).

A 'HIGH' region motif is present at residues 53–63 (PYPSGKLHMGH). The short motif at 631–635 (KMSKS) is the 'KMSKS' region element. Lysine 634 serves as a coordination point for ATP.

Belongs to the class-I aminoacyl-tRNA synthetase family.

It localises to the cytoplasm. It catalyses the reaction tRNA(Leu) + L-leucine + ATP = L-leucyl-tRNA(Leu) + AMP + diphosphate. The chain is Leucine--tRNA ligase from Psychrobacter sp. (strain PRwf-1).